Reading from the N-terminus, the 361-residue chain is Probable mannose-1-phosphate guanylyltransferase 1 (361 aa).

Residues Leu6 and Val7 each coordinate GDP-alpha-D-mannose. The diphosphate site is built by Gly9, Gly11, Thr12, Arg13, and Lys23. Positions 85, 109, 111, 146, and 173 each coordinate GDP-alpha-D-mannose.

Belongs to the transferase hexapeptide repeat family.

It catalyses the reaction alpha-D-mannose 1-phosphate + GTP + H(+) = GDP-alpha-D-mannose + diphosphate. The protein operates within nucleotide-sugar biosynthesis; GDP-alpha-D-mannose biosynthesis; GDP-alpha-D-mannose from alpha-D-mannose 1-phosphate (GTP route): step 1/1. In terms of biological role, catalyzes a reaction of the Smirnoff-Wheeler pathway, the major route to ascorbate biosynthesis in plants. In Oryza sativa subsp. japonica (Rice), this protein is Probable mannose-1-phosphate guanylyltransferase 1.